The sequence spans 642 residues: Kinesin-like protein KIN-7L (642 aa).

The region spanning 3–337 (KISVAVRFRP…LQFASRAKCV (335 aa)) is the Kinesin motor domain. Residues 12–27 (PPTTAAPAADQSPSST) show a composition bias toward low complexity. The tract at residues 12–33 (PPTTAAPAADQSPSSTGGDREW) is disordered. 94–101 (GQTSSGKT) contacts ATP. Coiled-coil stretches lie at residues 343 to 428 (VNEI…SNTS) and 540 to 612 (RQQL…FSQA).

The protein belongs to the TRAFAC class myosin-kinesin ATPase superfamily. Kinesin family. KIN-7 subfamily.

In Oryza sativa subsp. japonica (Rice), this protein is Kinesin-like protein KIN-7L.